The primary structure comprises 196 residues: ATP-dependent Clp protease proteolytic subunit (196 aa).

Serine 99 functions as the Nucleophile in the catalytic mechanism. Residue histidine 124 is part of the active site.

It belongs to the peptidase S14 family. In terms of assembly, fourteen ClpP subunits assemble into 2 heptameric rings which stack back to back to give a disk-like structure with a central cavity, resembling the structure of eukaryotic proteasomes.

The protein resides in the cytoplasm. It catalyses the reaction Hydrolysis of proteins to small peptides in the presence of ATP and magnesium. alpha-casein is the usual test substrate. In the absence of ATP, only oligopeptides shorter than five residues are hydrolyzed (such as succinyl-Leu-Tyr-|-NHMec, and Leu-Tyr-Leu-|-Tyr-Trp, in which cleavage of the -Tyr-|-Leu- and -Tyr-|-Trp bonds also occurs).. Functionally, cleaves peptides in various proteins in a process that requires ATP hydrolysis. Has a chymotrypsin-like activity. Plays a major role in the degradation of misfolded proteins. This is ATP-dependent Clp protease proteolytic subunit from Nitratiruptor sp. (strain SB155-2).